The primary structure comprises 394 residues: Elongation factor Tu (394 aa).

A tr-type G domain is found at 10-204 (KPHVNVGTIG…ALDSYIPEPE (195 aa)). Residues 19 to 26 (GHVDHGKT) are G1. 19–26 (GHVDHGKT) is a GTP binding site. Threonine 26 serves as a coordination point for Mg(2+). The segment at 60 to 64 (GITIS) is G2. The segment at 81 to 84 (DCPG) is G3. Residues 81–85 (DCPGH) and 136–139 (NKCD) each bind GTP. The segment at 136–139 (NKCD) is G4. The segment at 174–176 (SAL) is G5.

This sequence belongs to the TRAFAC class translation factor GTPase superfamily. Classic translation factor GTPase family. EF-Tu/EF-1A subfamily. Monomer.

It is found in the cytoplasm. It catalyses the reaction GTP + H2O = GDP + phosphate + H(+). In terms of biological role, GTP hydrolase that promotes the GTP-dependent binding of aminoacyl-tRNA to the A-site of ribosomes during protein biosynthesis. The protein is Elongation factor Tu of Alteromonas mediterranea (strain DSM 17117 / CIP 110805 / LMG 28347 / Deep ecotype).